Consider the following 435-residue polypeptide: NADH-quinone oxidoreductase subunit D (435 aa).

It belongs to the complex I 49 kDa subunit family. In terms of assembly, NDH-1 is composed of 14 different subunits. Subunits NuoB, C, D, E, F, and G constitute the peripheral sector of the complex.

It is found in the cell inner membrane. It catalyses the reaction a quinone + NADH + 5 H(+)(in) = a quinol + NAD(+) + 4 H(+)(out). Functionally, NDH-1 shuttles electrons from NADH, via FMN and iron-sulfur (Fe-S) centers, to quinones in the respiratory chain. The immediate electron acceptor for the enzyme in this species is believed to be ubiquinone. Couples the redox reaction to proton translocation (for every two electrons transferred, four hydrogen ions are translocated across the cytoplasmic membrane), and thus conserves the redox energy in a proton gradient. This Xanthomonas oryzae pv. oryzae (strain MAFF 311018) protein is NADH-quinone oxidoreductase subunit D.